The following is a 647-amino-acid chain: MMLPADFFVPVSKMMLLALLLSIIICCGGAQRSEPMFTAVTDTVLPQDYDSNPTQLNYGVAITDVDNDGDFEVVVAGYNGPNLVLKYIKEKGHLVNIAVDERSSPYYALRDRQGNAIGVAACDIDGDGREEIYFLNTNNAFSGIATYSDKLFTFRNGRWEDLFSDEVNLRRGVANRFSGRSVACIDRKGSGRYSFYIANYANGNVGPHALIELDETASNLSRGIIVLSNVAAELGLNKYTGGRGIAVGPIVNSAASDIFCDNENGPNFLFQNKGDGTFVDIASSTGVDDVYQHGRGVALADFNRDGKVDIVYGNWNGPHRLFLQMNTNGKVRFRDIATQKFSMPSPIRTVIAADFDNDQELEVFFNNIAYRGPSANRMFRVGRREHADPFMEELNPGDASEPDGRGTGGAVTDFDGDGMLDLILSHGESMAQPLSVFKGKQGLKNNWLRVIPRTKFGAFARGAKVVLYTKKSGAHLRIIDGGSGYLCEMEPVAHFGLGKDEASSLEVTWPDGKIFTRSVAEGEINSVLDIAYPHEDDTVTKPTDIECGQGFSVNENGRCTDTDECIQFPFVCPREKPVCINTYGGYKCRPNRRCSRGFEPNEDGTACVAQVAYFGSYPSSASRSQALFLHCTASLLGLGFYFQIYTL.

Residues 1–30 (MMLPADFFVPVSKMMLLALLLSIIICCGGA) form the signal peptide. An FG-GAP 1; atypical repeat occupies 48–90 (DYDSNPTQLNYGVAITDVDNDGDFEVVVAGYNGPNLVLKYIKE). One copy of the FG-GAP 2; atypical repeat lies at 107–149 (YALRDRQGNAIGVAACDIDGDGREEIYFLNTNNAFSGIATYSD). Residues 285–335 (TGVDDVYQHGRGVALADFNRDGKVDIVYGNWNGPHRLFLQMNTNGKVRFRD) form an FG-GAP 3; atypical repeat. The stretch at 397-439 (GDASEPDGRGTGGAVTDFDGDGMLDLILSHGESMAQPLSVFKG) is one FG-GAP 4; atypical repeat. One can recognise an EGF-like domain in the interval 561–607 (DTDECIQFPFVCPREKPVCINTYGGYKCRPNRRCSRGFEPNEDGTAC). 3 disulfides stabilise this stretch: C565-C579, C572-C588, and C594-C607.

The protein resides in the secreted. The protein localises to the extracellular space. It localises to the extracellular matrix. This is Cartilage acidic protein 1 (crtac1) from Xenopus tropicalis (Western clawed frog).